Here is a 541-residue protein sequence, read N- to C-terminus: Calcium/calmodulin-dependent protein kinase kinase (541 aa).

A disordered region spans residues 83–106 (AVQEDDEAGPHSSNNLAATMSPNL). Polar residues predominate over residues 93-106 (HSSNNLAATMSPNL). In terms of domain architecture, Protein kinase spans 130–411 (YRLMEEIGQG…LHEVKVHTWV (282 aa)). ATP is bound by residues 136 to 144 (IGQGSYGIV) and Lys159. Residues 169-190 (NFACFRQPPPRRNKENAAPSVL) are RP domain. The Proton acceptor role is filled by Asp276. Positions 437–442 (ENCVRV) are autoinhibitory domain. Residues 440–465 (VRVIPRLDTLILVKAMGHRKRFGNPF) form a calmodulin-binding region. A disordered region spans residues 462-512 (GNPFRNKLSAQSSIRDRRKSSSVKDPTYVPPPNSPPATSNNNLNSTKVDRP). Residues 497–507 (PATSNNNLNST) show a composition bias toward low complexity.

Belongs to the protein kinase superfamily. Ser/Thr protein kinase family. Mg(2+) serves as cofactor. As to expression, expressed in head and tail neurons and vulval muscles.

The protein resides in the cytoplasm. It catalyses the reaction L-seryl-[protein] + ATP = O-phospho-L-seryl-[protein] + ADP + H(+). The catalysed reaction is L-threonyl-[protein] + ATP = O-phospho-L-threonyl-[protein] + ADP + H(+). Its activity is regulated as follows. Activated by Ca(2+)/calmodulin. Binding of calmodulin may relieve intrasteric autoinhibition. Calcium/calmodulin-dependent protein kinase which phosphorylates cmk-1. Component of a calcium-triggered signaling cascade involved in CRE-mediated transcriptional activation, probably through cmk-1-mediated crh-1/CREB phosphorylation. Plays a role in salt-avoidance learning behavior via the phosphorylation of cmk-1. The chain is Calcium/calmodulin-dependent protein kinase kinase from Caenorhabditis elegans.